The sequence spans 815 residues: cGMP-specific 3',5'-cyclic phosphodiesterase delta (815 aa).

The Cytoplasmic segment spans residues 1-56 (MNEYNNDNMEQEKEKKKEEQKYKNIIKKEYFIFPRLYDKNKEIEYNKLRIHNIKEY). Residues 57-77 (ICIHLTISLFIILIECFVFSF) traverse the membrane as a helical segment. The Extracellular portion of the chain corresponds to 78–86 (NLNIKDTTY). The helical transmembrane segment at 87-107 (VEICVVIFSILNCLMHIVVLI) threads the bilayer. The Cytoplasmic portion of the chain corresponds to 108–120 (KMYFFTSESVYTK). The chain crosses the membrane as a helical span at residues 121 to 141 (GVFIGYIVLNQVFQFLSLYFF). The Extracellular segment spans residues 142–160 (TKRNEQSKNDIAHLKYYDN). A helical membrane pass occupies residues 161–181 (SFNLYVHFFVDSVFILCLPAL). Topologically, residues 182 to 183 (SF) are cytoplasmic. A helical membrane pass occupies residues 184 to 204 (FLSVLFMMMFLCLNILLINMI). Residues 205–210 (KFNKTN) lie on the Extracellular side of the membrane. Asn207 carries an N-linked (GlcNAc...) asparagine glycan. Residues 211 to 231 (YGSDIYHICLLSVVLLMFLIL) form a helical membrane-spanning segment. The Cytoplasmic segment spans residues 232-815 (RYMMEERNRL…FKEEIKHGKL (584 aa)). Residues 384 to 762 (YEVEVLKNIK…QTWRLIEKNI (379 aa)) form the PDEase domain. His459 functions as the Proton donor in the catalytic mechanism. A 3',5'-cyclic GMP-binding site is contributed by 459 to 463 (HNANH). Residues His463, His499, Asp500, and Asp616 each coordinate a divalent metal cation. 3',5'-cyclic GMP contacts are provided by Asp500, Asp616, and Gln715.

Belongs to the cyclic nucleotide phosphodiesterase family. Requires a divalent metal cation as cofactor.

The protein localises to the membrane. The catalysed reaction is 3',5'-cyclic GMP + H2O = GMP + H(+). It participates in purine metabolism; 3',5'-cyclic GMP degradation; GMP from 3',5'-cyclic GMP: step 1/1. In terms of biological role, specifically hydrolyzes the second messenger cGMP, which is a key regulator of many important physiological processes. Probably by regulating cGMP levels, required for activation of gametogenesis. This Plasmodium falciparum (isolate 3D7) protein is cGMP-specific 3',5'-cyclic phosphodiesterase delta.